The following is a 123-amino-acid chain: Large ribosomal subunit protein bL12 (123 aa).

An N6-methyllysine modification is found at lysine 84. Positions 94-123 are disordered; it reads PATLKEGMSKEDGDEAKTKLEEAGASVELK. Basic and acidic residues predominate over residues 100-115; it reads GMSKEDGDEAKTKLEE.

It belongs to the bacterial ribosomal protein bL12 family. Homodimer. Part of the ribosomal stalk of the 50S ribosomal subunit. Forms a multimeric L10(L12)X complex, where L10 forms an elongated spine to which 2 to 4 L12 dimers bind in a sequential fashion. Binds GTP-bound translation factors.

Functionally, seems to be the binding site for several of the factors involved in protein synthesis and appears to be essential for accurate translation. Its function is as follows. Forms part of the ribosomal stalk which helps the ribosome interact with GTP-bound translation factors. Is thus essential for accurate translation. This chain is Large ribosomal subunit protein bL12, found in Halophilic eubacterium NRCC 41227.